Reading from the N-terminus, the 705-residue chain is Elongation factor G (705 aa).

One can recognise a tr-type G domain in the interval 6–282; that stretch reads NKVRNIGIMA…AVVDFLPSPL (277 aa). GTP-binding positions include 15 to 22, 79 to 83, and 133 to 136; these read AHIDAGKT, DTPGH, and NKMD.

Belongs to the TRAFAC class translation factor GTPase superfamily. Classic translation factor GTPase family. EF-G/EF-2 subfamily.

The protein localises to the cytoplasm. Catalyzes the GTP-dependent ribosomal translocation step during translation elongation. During this step, the ribosome changes from the pre-translocational (PRE) to the post-translocational (POST) state as the newly formed A-site-bound peptidyl-tRNA and P-site-bound deacylated tRNA move to the P and E sites, respectively. Catalyzes the coordinated movement of the two tRNA molecules, the mRNA and conformational changes in the ribosome. The chain is Elongation factor G from Corynebacterium glutamicum (strain ATCC 13032 / DSM 20300 / JCM 1318 / BCRC 11384 / CCUG 27702 / LMG 3730 / NBRC 12168 / NCIMB 10025 / NRRL B-2784 / 534).